The primary structure comprises 224 residues: 4'-phosphopantetheinyl transferase ffp (224 aa).

Residues aspartate 107, glutamate 109, and glutamate 151 each contribute to the Mg(2+) site. A peptidyl carrier protein binding region spans residues 158-189 (GKGLSLPLDSFSVRLHEDGRVSVELPEHHTPC).

It belongs to the P-Pant transferase superfamily. Gsp/Sfp/HetI/AcpT family. Requires Mg(2+) as cofactor.

It carries out the reaction apo-[peptidyl-carrier protein] + CoA = holo-[peptidyl-carrier protein] + adenosine 3',5'-bisphosphate + H(+). In terms of biological role, may activate the peptidyl carrier protein (PCP) domains of fengycin synthase by transferring the 4'-phosphopantetheinyl moiety of coenzyme A (CoA) to a serine residue. The sequence is that of 4'-phosphopantetheinyl transferase ffp (ffp) from Bacillus subtilis.